The primary structure comprises 322 residues: MNQPFEVKLEEHWLRDTYVDLLLEYAQKDDRIVALDADLMAASSVKRFSQQMPGRAIDVGVAEANMIGVAAGLAAMGKIPFTHSFTAFASRRVCDQVTLSVAYAGLNVKMVGSDPGITAELNGGTHMSMEDVSIMRNIPGMTVYEPVDSAQLRAAFPQILAHDGPVYIRLLRRPAVRIDSENDEFTLGKASLLREGGDVTILATGIMVAEALLAAEELAGQGIGAEVLNVHTVKPFDEEAVLRSAMKTGAVVTAENASVIGGLGSAAAECLGENCPVPLRRVGVRDCFGEVGLTDYLKEKFGLTAKEIVRAAHEVTERKNFR.

This sequence belongs to the transketolase family. In terms of assembly, forms a complex with SqwG. Requires thiamine diphosphate as cofactor.

It carries out the reaction 6-deoxy-6-sulfo-D-fructose + D-glyceraldehyde 3-phosphate = 4-deoxy-4-sulfo-D-erythrose + D-xylulose 5-phosphate. The catalysed reaction is 4-deoxy-4-sulfo-D-erythrulose + D-glyceraldehyde 3-phosphate = sulfoacetaldehyde + D-xylulose 5-phosphate. Functionally, part of the sulfo-TK pathway, a D-sulfoquinovose degradation pathway that produces 2-hydroxyethane-1-sulfonate (isethionate). Catalyzes two steps of the pathway: the formation of 4-deoxy-4-sulfoerythrose (SE) and xylulose 5-phosphate from 6-deoxy-6-sulfo-D-fructose (SF) and glyceraldehyde 3-phosphate, and the formation of sulfoacetaldehyde (SA) and xylulose 5-phosphate from 4-deoxy-4-sulfo-D-erythrulose (SEu) and glyceraldehyde 3-phosphate. The polypeptide is 6-deoxy-6-sulfo-D-fructose transketolase subunit SqwH (Clostridium sp. (strain MSTE9)).